The chain runs to 492 residues: Aerolysin-4 (492 aa).

The first 23 residues, 1–23, serve as a signal peptide directing secretion; it reads MKKLKITGLSLIISGLLMAQAQA. Cystine bridges form between C42–C98 and C182–C187. An interaction with host N-linked glycan region spans residues 68–84; the sequence is WQISGLANGWVIMGPGY. Residues 256 to 288 are part of the transmembrane beta-barrel after proteolytic activation of the toxin and insertion into the host membrane; sequence YGLSEKVTTKNKFKWPLVGETELSIEIAANQSW. The interval 346-355 is interaction with glycans from host GPI-anchor; the sequence is RWGGNAWYTH. Positions 446 to 492 are excised as a propeptide; sequence AAASHSSRARNLSAGQGLRLEIPLDAQELSGLGFNNVSLSVTPAANQ.

Belongs to the aerolysin family. As to quaternary structure, homodimer in solution; homoheptamer in the host membrane. After binding to GPI-anchored proteins in target membranes and proteolytic removal of the C-terminal propeptide, the protein assembles into a heptameric pre-pore complex. A further conformation change leads to insertion into the host membrane. Post-translationally, proteolytic cleavage and subsequent release of the propeptide trigger a major conformation change, leading to the formation of a heptameric pre-pore that then inserts into the host membrane.

It is found in the secreted. Its subcellular location is the host cell membrane. Its function is as follows. Secreted, cytolytic toxin that forms pores in host membranes after proteolytic removal of a C-terminal propeptide, leading to destruction of the membrane permeability barrier and cell death. The pores are formed by transmembrane beta-strands and are approximately 3 nm in diameter. This chain is Aerolysin-4 (ahh4), found in Aeromonas hydrophila.